The sequence spans 520 residues: ATP synthase subunit alpha 2 (520 aa).

176 to 183 contributes to the ATP binding site; the sequence is GDRQTGKT.

The protein belongs to the ATPase alpha/beta chains family. F-type ATPases have 2 components, CF(1) - the catalytic core - and CF(0) - the membrane proton channel. CF(1) has five subunits: alpha(3), beta(3), gamma(1), delta(1), epsilon(1). CF(0) has three main subunits: a(1), b(2) and c(9-12). The alpha and beta chains form an alternating ring which encloses part of the gamma chain. CF(1) is attached to CF(0) by a central stalk formed by the gamma and epsilon chains, while a peripheral stalk is formed by the delta and b chains.

It localises to the cell inner membrane. It catalyses the reaction ATP + H2O + 4 H(+)(in) = ADP + phosphate + 5 H(+)(out). Its function is as follows. Produces ATP from ADP in the presence of a proton gradient across the membrane. The alpha chain is a regulatory subunit. This is ATP synthase subunit alpha 2 from Polaromonas naphthalenivorans (strain CJ2).